A 336-amino-acid polypeptide reads, in one-letter code: Flagellar filament 41 kDa core protein (336 aa).

The interval 208 to 236 (AAPVQEGVQQEGAQQPAPATAPSQGGVNS) is disordered. Low complexity predominate over residues 210 to 233 (PVQEGVQQEGAQQPAPATAPSQGG).

It belongs to the bacterial flagellin family. As to quaternary structure, the flagellum consists of an outer layer composed of repeating units of FlaA around a core that contains several antigenically related polypeptides.

It localises to the periplasmic flagellum. The protein resides in the periplasm. Component of the core of the flagella. This is Flagellar filament 41 kDa core protein (fla) from Borreliella burgdorferi (strain ATCC 35210 / DSM 4680 / CIP 102532 / B31) (Borrelia burgdorferi).